We begin with the raw amino-acid sequence, 369 residues long: Queuine tRNA-ribosyltransferase (369 aa).

Asp-89 functions as the Proton acceptor in the catalytic mechanism. Substrate is bound by residues 89 to 93, Asp-143, Gln-187, and Gly-214; that span reads DSGGF. The segment at 245-251 is RNA binding; that stretch reads GVGTPED. The active-site Nucleophile is the Asp-264. The interval 269-273 is RNA binding; important for wobble base 34 recognition; that stretch reads TRNAR. Zn(2+) is bound by residues Cys-302, Cys-304, Cys-307, and His-333.

This sequence belongs to the queuine tRNA-ribosyltransferase family. Homodimer. Within each dimer, one monomer is responsible for RNA recognition and catalysis, while the other monomer binds to the replacement base PreQ1. Requires Zn(2+) as cofactor.

The enzyme catalyses 7-aminomethyl-7-carbaguanine + guanosine(34) in tRNA = 7-aminomethyl-7-carbaguanosine(34) in tRNA + guanine. Its pathway is tRNA modification; tRNA-queuosine biosynthesis. Its function is as follows. Catalyzes the base-exchange of a guanine (G) residue with the queuine precursor 7-aminomethyl-7-deazaguanine (PreQ1) at position 34 (anticodon wobble position) in tRNAs with GU(N) anticodons (tRNA-Asp, -Asn, -His and -Tyr). Catalysis occurs through a double-displacement mechanism. The nucleophile active site attacks the C1' of nucleotide 34 to detach the guanine base from the RNA, forming a covalent enzyme-RNA intermediate. The proton acceptor active site deprotonates the incoming PreQ1, allowing a nucleophilic attack on the C1' of the ribose to form the product. After dissociation, two additional enzymatic reactions on the tRNA convert PreQ1 to queuine (Q), resulting in the hypermodified nucleoside queuosine (7-(((4,5-cis-dihydroxy-2-cyclopenten-1-yl)amino)methyl)-7-deazaguanosine). The polypeptide is Queuine tRNA-ribosyltransferase (Dechloromonas aromatica (strain RCB)).